Reading from the N-terminus, the 291-residue chain is Mitochondrial citrate transporter B (291 aa).

3 Solcar repeats span residues 10-97 (PQKW…IKNS), 105-193 (LSPA…LKES), and 201-283 (PTLF…MTYL). 6 consecutive transmembrane segments (helical) span residues 16 to 36 (LIAG…FEYA), 74 to 94 (STLI…YDTI), 112 to 132 (VAGV…TERI), 172 to 192 (TTLK…ILKE), 203 to 220 (LFTT…TVYA), and 255 to 276 (FWKG…VFSV).

This sequence belongs to the mitochondrial carrier (TC 2.A.29) family.

The protein resides in the mitochondrion inner membrane. It carries out the reaction citrate(in) + H(+)(in) = citrate(out) + H(+)(out). In terms of biological role, mitochondrial transporter that mediates citrate export from mitochondria to cytoplasm. Both ctpA, ctpB, and ctpD play important roles in citric acid transport across the mitochondrial membrane and function in a redundant manner. In Aspergillus niger (strain ATCC 1015 / CBS 113.46 / FGSC A1144 / LSHB Ac4 / NCTC 3858a / NRRL 328 / USDA 3528.7), this protein is Mitochondrial citrate transporter B.